Here is a 311-residue protein sequence, read N- to C-terminus: MSFARETKEELAHIIPQKSCCQRAELGAYVKMLGDLGISNKKLKLSLKTPLSFLARKILILLKNNGFKTKTLVQDHGRLSQKNFYYIEVEEHVDELLKEYGFIDEKGNLSNRINENYIKNDCCRRSFLRGVFLAGGSLNDPAGDYHLELNLPDEAFARQVSKVLQKYHFTFRLLKRKTAPFLYLKDAEQILSFLSLIGAHQSLLKFENVRVVKEVRNQVNRLVNCETANIKKAVKTAVKQIKDIEYIAEKIGLDNLEPALKEIALLRLDNPDLSLKELGSLLTPPLTKSGVNHRFRKLELIAEKIRNGALG.

A DNA-binding region (H-T-H motif) is located at residues 274-307 (SLKELGSLLTPPLTKSGVNHRFRKLELIAEKIRN).

The protein belongs to the WhiA family.

Involved in cell division and chromosome segregation. The polypeptide is Probable cell division protein WhiA (Carboxydothermus hydrogenoformans (strain ATCC BAA-161 / DSM 6008 / Z-2901)).